Here is a 425-residue protein sequence, read N- to C-terminus: Alpha/beta hydrolase xenA (425 aa).

Asp-366 is an active-site residue.

Belongs to the AB hydrolase superfamily. FUS2 hydrolase family. As to quaternary structure, homodimer.

It functions in the pathway mycotoxin biosynthesis. Alpha/beta hydrolase; part of the gene cluster that mediates the biosynthesis of xenoacremones such as xenoacremone A, a compound that shows inhibitory activity toward the PI3K/AKT signaling pathway and which has the ability to induce apoptosis of A549 lung cancer cells. Within the pathway, cooperation of the hybrid PKS-NRPS xenE and the trans-acting enoyl reductase xenG is responsible for the formation of the reduced tyrosine-nonaketide derivative. The alpha/beta hydrolase xenA then accelerates intramolecular nucleophilic attack to give a pyrrolidone derivative. Subsequently, three enzymes, xenF, xenD, and xenC, coordinately participate in the conversion to xenoacremone B. XenF catalyzes sigmatropic rearrangement to form an A-ring, which leads to an unusual intermediate with a hexane ring, which is required for the formation of the tricarbocyclic product. Epoxidation catalyzed by xenD and the formation of the paracyclophane ether catalyzed by xenC initiate a spontaneous intramolecular Diels-Alder (IMDA) reaction to yield xenoacremone B. Spontaneous hydration of xenoacremone B leads to the formation of xenoacremone A, which undergoes subsequent methylation to afford xenoacremone C. This chain is Alpha/beta hydrolase xenA, found in Xenoacremonium sinensis (Endophyte fungus).